The sequence spans 659 residues: UvrABC system protein B (659 aa).

The Helicase ATP-binding domain occupies 25–182 (QSIENGNRGQ…KKLIEIQYER (158 aa)). 38–45 (GVTGSGKT) provides a ligand contact to ATP. A Beta-hairpin motif is present at residues 91-114 (YYDYYQPEAYVPQTDTFIEKDASI). Residues 429–582 (QIDDLYGEIQ…QMEYNEEHNI (154 aa)) form the Helicase C-terminal domain. Positions 622–657 (EKLIEQYEEEMKEAAKNLQFERAAELRDIIKDLKEN) constitute a UVR domain.

Belongs to the UvrB family. As to quaternary structure, forms a heterotetramer with UvrA during the search for lesions. Interacts with UvrC in an incision complex.

It localises to the cytoplasm. The UvrABC repair system catalyzes the recognition and processing of DNA lesions. A damage recognition complex composed of 2 UvrA and 2 UvrB subunits scans DNA for abnormalities. Upon binding of the UvrA(2)B(2) complex to a putative damaged site, the DNA wraps around one UvrB monomer. DNA wrap is dependent on ATP binding by UvrB and probably causes local melting of the DNA helix, facilitating insertion of UvrB beta-hairpin between the DNA strands. Then UvrB probes one DNA strand for the presence of a lesion. If a lesion is found the UvrA subunits dissociate and the UvrB-DNA preincision complex is formed. This complex is subsequently bound by UvrC and the second UvrB is released. If no lesion is found, the DNA wraps around the other UvrB subunit that will check the other stand for damage. The sequence is that of UvrABC system protein B from Clostridium perfringens (strain SM101 / Type A).